We begin with the raw amino-acid sequence, 261 residues long: MARKPLIAGNWKMNLNHFEAIALVQKIAFSLPDKYFDKVDVTVIPPFTDLRSVQTLVDGDKLRLSYGAQDVSQHDSGAYTGEISGAFLAKLGCSFAVVGHSERRTYHHEDDALVAAKAAAAFRHGITPIVCIGEHLKVREAGNHVEHNVEQLRGSLAGLTSEQIGQAVIAYEPVWAIGTGRVAGAADAQEVCKAIRDELGKLSSPQLAAGIRVLYGGSVNAKNVGEIVAQEDVDGALVGGASLDGEQFATLSAIAAGGPLP.

Substrate is bound at residue 10 to 12; sequence NWK. Catalysis depends on H100, which acts as the Electrophile. The active-site Proton acceptor is E172. Substrate contacts are provided by residues G178, S218, and 239 to 240; that span reads GG.

This sequence belongs to the triosephosphate isomerase family. In terms of assembly, homodimer.

The protein resides in the cytoplasm. It catalyses the reaction D-glyceraldehyde 3-phosphate = dihydroxyacetone phosphate. It functions in the pathway carbohydrate biosynthesis; gluconeogenesis. The protein operates within carbohydrate degradation; glycolysis; D-glyceraldehyde 3-phosphate from glycerone phosphate: step 1/1. In terms of biological role, involved in the gluconeogenesis. Catalyzes stereospecifically the conversion of dihydroxyacetone phosphate (DHAP) to D-glyceraldehyde-3-phosphate (G3P). This Mycobacterium sp. (strain JLS) protein is Triosephosphate isomerase.